Reading from the N-terminus, the 545-residue chain is B3 domain-containing protein Os03g0620500 (545 aa).

A DNA-binding region (TF-B3 1) is located at residues 26-119; sequence MKCFHRQMSA…RRASGVQERN (94 aa). Positions 111 to 188 are disordered; it reads RASGVQERNA…SSSEHESSYD (78 aa). Residues 173–186 show a composition bias toward basic and acidic residues; the sequence is EEAKESSSSEHESS. Residues 231–331 constitute a DNA-binding region (TF-B3 2); sequence VTTMKHSNVN…RATVHLLRET (101 aa). Positions 368–400 are disordered; it reads RRGTMEPSTTNVKKEADNEQCNNGQGKRQEPLN. Positions 441–542 form a DNA-binding region, TF-B3 3; it reads YVSIMNKSNV…AMKVHIIRHN (102 aa).

The protein resides in the nucleus. The chain is B3 domain-containing protein Os03g0620500 from Oryza sativa subsp. japonica (Rice).